The following is a 663-amino-acid chain: UvrABC system protein B (663 aa).

Over residues 1 to 10 (MIDKRDDKPF) the composition is skewed to basic and acidic residues. A disordered region spans residues 1–23 (MIDKRDDKPFKLKSKYKPSGDQP). Residues 31–418 (DNIEGGEKAQ…TNTIIEQIIR (388 aa)) enclose the Helicase ATP-binding domain. Residue 44 to 51 (GATGTGKT) coordinates ATP. Residues 97–120 (YYDYYQPEAYVPSSDTYIEKDSSV) carry the Beta-hairpin motif. Residues 435–601 (QMDDLLGEIN…TIKKDIRGLI (167 aa)) enclose the Helicase C-terminal domain. One can recognise a UVR domain in the interval 627–662 (KEAINALQKQMQEAAELLDFELAAQMRDLILELKLM).

This sequence belongs to the UvrB family. As to quaternary structure, forms a heterotetramer with UvrA during the search for lesions. Interacts with UvrC in an incision complex.

It is found in the cytoplasm. In terms of biological role, the UvrABC repair system catalyzes the recognition and processing of DNA lesions. A damage recognition complex composed of 2 UvrA and 2 UvrB subunits scans DNA for abnormalities. Upon binding of the UvrA(2)B(2) complex to a putative damaged site, the DNA wraps around one UvrB monomer. DNA wrap is dependent on ATP binding by UvrB and probably causes local melting of the DNA helix, facilitating insertion of UvrB beta-hairpin between the DNA strands. Then UvrB probes one DNA strand for the presence of a lesion. If a lesion is found the UvrA subunits dissociate and the UvrB-DNA preincision complex is formed. This complex is subsequently bound by UvrC and the second UvrB is released. If no lesion is found, the DNA wraps around the other UvrB subunit that will check the other stand for damage. This chain is UvrABC system protein B, found in Streptococcus pyogenes serotype M28 (strain MGAS6180).